Here is a 32-residue protein sequence, read N- to C-terminus: Snake venom serine proteinase (32 aa).

Residues 1–32 (VIGGDECDINEHRFLVFLTXASGLACGGTLIN) form the Peptidase S1 domain.

It belongs to the peptidase S1 family. Snake venom subfamily. Monomer. Contains 6 disulfide bonds. In terms of processing, glycosylated. As to expression, expressed by the venom gland.

Its subcellular location is the secreted. Its function is as follows. Cleaves a kininogen analog with the release of kallidin (lysyl-bradykinin). Completely cleaves fibrinogen Aalpha chain, partially cleaves Bbeta chain and has no activity on gamma chain. This is Snake venom serine proteinase from Bitis arietans (African puff adder).